The chain runs to 294 residues: 4-hydroxy-tetrahydrodipicolinate synthase (294 aa).

Pyruvate is bound at residue Thr-47. Tyr-135 (proton donor/acceptor) is an active-site residue. Lys-163 serves as the catalytic Schiff-base intermediate with substrate. Ile-206 is a pyruvate binding site.

Belongs to the DapA family. In terms of assembly, homodimer.

The protein resides in the cytoplasm. The enzyme catalyses L-aspartate 4-semialdehyde + pyruvate = (2S,4S)-4-hydroxy-2,3,4,5-tetrahydrodipicolinate + H2O + H(+). The protein operates within amino-acid biosynthesis; L-lysine biosynthesis via DAP pathway; (S)-tetrahydrodipicolinate from L-aspartate: step 3/4. Catalyzes the condensation of (S)-aspartate-beta-semialdehyde [(S)-ASA] and pyruvate to 4-hydroxy-tetrahydrodipicolinate (HTPA). The protein is 4-hydroxy-tetrahydrodipicolinate synthase of Staphylococcus haemolyticus (strain JCSC1435).